A 148-amino-acid chain; its full sequence is Leghemoglobin 2 (148 aa).

A Globin domain is found at 2–148 (GFTEKQEALV…LSAAIKKAMS (147 aa)). Tyr30 bears the Nitrated tyrosine mark. Residue Ser45 coordinates heme b. Phosphoserine is present on Ser45. His63 is an O2 binding site. 3 residues coordinate heme b: Lys66, His95, and Lys98. Nitrated tyrosine is present on Tyr136.

The protein belongs to the plant globin family. Monomer. In terms of processing, nitrated in effective nodules and particularly in hypoxic conditions; this mechanism may play a protective role in the symbiosis by buffering toxic peroxynitrite NO(2)(-). Nitration level decrease during nodule senescence. Phosphorylation at Ser-45 disrupts the molecular environment of its porphyrin ring oxygen binding pocket, thus leading to a reduced oxygen consumption and to the delivery of oxygen O(2) to symbiosomes. As to expression, stem nodules.

The protein localises to the cytoplasm. Its subcellular location is the cytosol. The protein resides in the nucleus. Its function is as follows. Leghemoglobin that reversibly binds oxygen O(2) through a pentacoordinated heme iron. In stem nodules, facilitates the diffusion of oxygen to the bacteroids while preventing the bacterial nitrogenase from being inactivated by buffering dioxygen, nitric oxide and carbon monoxide, and promoting the formation of reactive oxygen species (ROS, e.g. H(2)O(2)). This role is essential for symbiotic nitrogen fixation (SNF). In Sesbania rostrata, this protein is Leghemoglobin 2.